The primary structure comprises 359 residues: UPF0284 protein MTH_1426 (359 aa).

The protein belongs to the UPF0284 family.

The protein is UPF0284 protein MTH_1426 of Methanothermobacter thermautotrophicus (strain ATCC 29096 / DSM 1053 / JCM 10044 / NBRC 100330 / Delta H) (Methanobacterium thermoautotrophicum).